The primary structure comprises 405 residues: Serpin H1 (405 aa).

Positions 1–15 are cleaved as a signal peptide; the sequence is MQIFLVLALCGLAAA. Residues Asn107 and Asn112 are each glycosylated (N-linked (GlcNAc...) asparagine). Positions 402-405 match the Prevents secretion from ER motif; sequence RDEL.

Belongs to the serpin family.

It is found in the endoplasmic reticulum lumen. Binds specifically to collagen. Could be involved as a chaperone in the biosynthetic pathway of collagen. The polypeptide is Serpin H1 (SERPINH1) (Gallus gallus (Chicken)).